The chain runs to 31 residues: Ranatuerin-2PL (31 aa).

A disulfide bridge connects residues C23 and C29.

Expressed by the skin glands.

The protein localises to the secreted. Its function is as follows. Antimicrobial activity against Gram-negative bacterium E.coli. In Lithobates palustris (Pickerel frog), this protein is Ranatuerin-2PL.